An 857-amino-acid chain; its full sequence is Median body protein (857 aa).

Coiled coils occupy residues 169-546 and 571-793; these read HNAL…MRTE and LAHL…TKAM.

Its subcellular location is the cytoplasm. The protein resides in the cytoskeleton. Its function is as follows. Structural component of the ventral disk involved in maintanance of a domed conformation of the disk required for proper attachment. May have a role in immobilizing the microtubules between cell divisions. The protein is Median body protein of Giardia intestinalis (strain ATCC 50803 / WB clone C6) (Giardia lamblia).